The primary structure comprises 171 residues: Myosin regulatory light chain 12B (171 aa).

A Phosphothreonine; by MLCK and ZIPK/DAPK3 modification is found at Thr-18. Ser-19 carries the phosphoserine; by MLCK and ZIPK/DAPK3 modification. EF-hand domains lie at 28–63 (SQIQ…LGKN), 97–132 (DPED…MGDR), and 133–168 (FTDE…GAKD). Residues Asp-41, Asn-43, Asp-45, and Asp-52 each coordinate Ca(2+).

Myosin is a hexamer of 2 heavy chains and 4 light chains: interacts with myosin heavy chain MYO19. Phosphorylation increases the actin-activated myosin ATPase activity and thereby regulates the contractile activity. It is required to generate the driving force in the migration of the cells but not necessary for localization of myosin-2 at the leading edge. Phosphorylation is reduced following epigallocatechin-3-O-gallate treatment.

Myosin regulatory subunit that plays an important role in regulation of both smooth muscle and nonmuscle cell contractile activity via its phosphorylation. Phosphorylation triggers actin polymerization in vascular smooth muscle. Implicated in cytokinesis, receptor capping, and cell locomotion. The protein is Myosin regulatory light chain 12B (MYL12B) of Bos taurus (Bovine).